The following is a 225-amino-acid chain: MVQSCSAYGCKNRYDKDKPISFHKFPLKRPLLCRKWEAAVRRADFKPTKYSSICSDHFTADCFKRECNNKLLKDNAVPTIFAHTEIKKKSGKAVKKEQLPAEPEPVPSVPEVDPAIGLLLPPLYTPSHIAVICDHNYTVEDTVHQRRRIQQLEEQVDKLRKKLKIANQKCRRQERSLEKLEREVSEYREAKGSGYVIFPGNYYEVLNENEYKELAPEITYKEIIL.

The THAP-type zinc finger occupies 5 to 57 (CSAYGCKNRYDKDKPISFHKFPLKRPLLCRKWEAAVRRADFKPTKYSSICSDH). Residues 139–194 (VEDTVHQRRRIQQLEEQVDKLRKKLKIANQKCRRQERSLEKLEREVSEYREAKGSG) are a coiled coil.

It belongs to the THAP1 family.

Its subcellular location is the nucleus. The protein localises to the nucleoplasm. DNA-binding transcription regulator that regulates endothelial cell proliferation and G1/S cell-cycle progression. Specifically binds the 5'-[AT]NTNN[GT]GGCA[AGT]-3' core DNA sequence and acts by modulating expression of pRB-E2F cell-cycle target genes. This chain is THAP domain-containing protein 1 (thap1), found in Xenopus tropicalis (Western clawed frog).